We begin with the raw amino-acid sequence, 866 residues long: Protein translocase subunit SecA (866 aa).

ATP-binding positions include glutamine 87, glycine 105–threonine 109, and aspartate 514. Positions valine 819–tyrosine 858 are disordered. The Zn(2+) site is built by cysteine 850, cysteine 852, cysteine 861, and cysteine 862.

The protein belongs to the SecA family. Monomer and homodimer. Part of the essential Sec protein translocation apparatus which comprises SecA, SecYEG and auxiliary proteins SecDF. Other proteins may also be involved. Zn(2+) serves as cofactor.

It localises to the cell inner membrane. It is found in the cytoplasm. It carries out the reaction ATP + H2O + cellular proteinSide 1 = ADP + phosphate + cellular proteinSide 2.. In terms of biological role, part of the Sec protein translocase complex. Interacts with the SecYEG preprotein conducting channel. Has a central role in coupling the hydrolysis of ATP to the transfer of proteins into and across the cell membrane, serving as an ATP-driven molecular motor driving the stepwise translocation of polypeptide chains across the membrane. This is Protein translocase subunit SecA from Elusimicrobium minutum (strain Pei191).